The following is a 584-amino-acid chain: Endoribonuclease YBEY, chloroplastic (584 aa).

A chloroplast-targeting transit peptide spans 1–50; the sequence is MLSRVCPTLRYNRIWSAHAREMPRATLLLLQPNFFHSSPKTALVNRLDVT. Zn(2+) contacts are provided by His240, His244, and His250.

This sequence belongs to the endoribonuclease YbeY family. It depends on Zn(2+) as a cofactor.

It is found in the plastid. It localises to the chloroplast stroma. In terms of biological role, endoribonuclease required for chloroplast ribosomal RNA (rRNA) processing and essential for normal growth and development. May be involved in maturation of both the 5' and 3' ends of 16S, 23S, and 4.5S rRNAs. Cleaves chloroplast rRNAs, mRNAs and tRNAs in vitro. In Arabidopsis thaliana (Mouse-ear cress), this protein is Endoribonuclease YBEY, chloroplastic.